A 274-amino-acid polypeptide reads, in one-letter code: Outer surface protein A (274 aa).

Positions Met1–Ala16 are cleaved as a signal peptide. Cys17 carries N-palmitoyl cysteine lipidation. Cys17 carries S-diacylglycerol cysteine lipidation.

The protein belongs to the OspA lipoprotein family.

The protein resides in the cell outer membrane. It is found in the cell surface. The protein is Outer surface protein A of Borreliella burgdorferi (Lyme disease spirochete).